The sequence spans 191 residues: Elongation factor P-like protein (191 aa).

This sequence belongs to the elongation factor P family.

The polypeptide is Elongation factor P-like protein (Shewanella sediminis (strain HAW-EB3)).